Here is a 492-residue protein sequence, read N- to C-terminus: Aerolysin-3 (492 aa).

Positions 1–23 are cleaved as a signal peptide; the sequence is MKKLKITGLSLIISGLLMAQAQA. Cystine bridges form between Cys42/Cys98 and Cys182/Cys187. Positions 68–84 are interaction with host N-linked glycan; that stretch reads WQISGLANGWVIMGPGY. The interval 256–288 is part of the transmembrane beta-barrel after proteolytic activation of the toxin and insertion into the host membrane; sequence YGLSEKVTTKNKFKWPLVGETELSIEIAANQSW. Residues 346 to 355 form an interaction with glycans from host GPI-anchor region; sequence RWGGNAWYTH. Residues 446-492 constitute a propeptide that is removed on maturation; it reads AAASHSSRARNLSAGQGLRLEIPLDAQELSGLGFNNVSLSVTPAANQ.

This sequence belongs to the aerolysin family. Homodimer in solution; homoheptamer in the host membrane. After binding to GPI-anchored proteins in target membranes and proteolytic removal of the C-terminal propeptide, the protein assembles into a heptameric pre-pore complex. A further conformation change leads to insertion into the host membrane. Post-translationally, proteolytic cleavage and subsequent release of the propeptide trigger a major conformation change, leading to the formation of a heptameric pre-pore that then inserts into the host membrane.

The protein localises to the secreted. The protein resides in the host cell membrane. Its function is as follows. Secreted, cytolytic toxin that forms pores in host membranes after proteolytic removal of a C-terminal propeptide, leading to destruction of the membrane permeability barrier and cell death. The pores are formed by transmembrane beta-strands and are approximately 3 nm in diameter. The chain is Aerolysin-3 (ahh3) from Aeromonas hydrophila.